The primary structure comprises 538 residues: Cytochrome P450 monooxygenase verH (538 aa).

Residues 2–21 (VFAMLVVCWSIFLGLWMLVS) form a helical membrane-spanning segment. C445 contacts heme.

It belongs to the cytochrome P450 family. Requires heme as cofactor.

The protein localises to the membrane. The protein operates within secondary metabolite biosynthesis; terpenoid biosynthesis. Its pathway is mycotoxin biosynthesis. Its function is as follows. Cytochrome P450 monooxygenase; part of the gene cluster that mediates the biosynthesis of the neurotoxin verrucosidin, a methylated alpha-pyrone polyketide that inhibits oxidative phosphorylation in mitochondria and thereby causes neurological diseases. The carbon backbone of verrucosidin is synthesized by the HR-PKS verA, and further modified by the other verrucodidin cluster enzymes. The sequence is that of Cytochrome P450 monooxygenase verH from Penicillium polonicum.